The chain runs to 461 residues: Fumarate hydratase class II (461 aa).

Substrate-binding positions include S98–T100, H129–D132, S139–N141, and T187. Catalysis depends on H188, which acts as the Proton donor/acceptor. The active site involves S318. Substrate is bound by residues S319 and K324–N326.

The protein belongs to the class-II fumarase/aspartase family. Fumarase subfamily. Homotetramer.

Its subcellular location is the cytoplasm. It carries out the reaction (S)-malate = fumarate + H2O. Its pathway is carbohydrate metabolism; tricarboxylic acid cycle; (S)-malate from fumarate: step 1/1. Functionally, involved in the TCA cycle. Catalyzes the stereospecific interconversion of fumarate to L-malate. In Rickettsia prowazekii (strain Madrid E), this protein is Fumarate hydratase class II.